The chain runs to 559 residues: Probable inorganic carbon transporter subunit DabB1 (559 aa).

The next 13 membrane-spanning stretches (helical) occupy residues 4 to 24 (LQWLIPLLPLLSALLVQLFAA), 33 to 53 (LSVALGTLTVIVAAYQLVAYI), 76 to 96 (LSSIMSLVVAGISLIVHVYSI), 106 to 126 (PRFFLLLDLMTASILLMVAAG), 173 to 193 (LVLAAVLLYQTYGAIDFPTLF), 202 to 222 (ATIMGLPTAITAAFLVALSAF), 240 to 260 (GPTPVSALMHAGIVNAGGFII), 273 to 293 (VLHMLFVVGLITALVGSVLML), 310 to 330 (MGFMVMECGLGAFSLAVFHLI), 375 to 395 (LPWLFIGLATLVVPLFILVIA), 408 to 428 (GAIVLLFFGWITGVQVLFATH), 440 to 460 (MMILLSFTLIVVGYTFIGHAF), and 487 to 507 (GLVFLLALIVVAGWFSSYLAS).

Belongs to the inorganic carbon transporter (TC 9.A.2) DabB family. Forms a complex with DabA1.

The protein localises to the cell inner membrane. Its function is as follows. Part of an energy-coupled inorganic carbon pump. The sequence is that of Probable inorganic carbon transporter subunit DabB1 from Halothiobacillus neapolitanus (strain ATCC 23641 / c2) (Thiobacillus neapolitanus).